We begin with the raw amino-acid sequence, 460 residues long: Protein Peter pan (460 aa).

In terms of domain architecture, Brix spans 28 to 290 (PHSFVIHRGL…LIKIEEGLLT (263 aa)). A phosphoserine mark is found at S237 and S239. Residues 295–350 (YHDHVVKTEDEKETLRKLVEKKRKQKEQRKKEQAENRARNLKLKKDEKWAAKRAAE) are a coiled coil. Positions 315–460 (KKRKQKEQRK…FDHRKSRKSK (146 aa)) are disordered. Basic and acidic residues-rich tracts occupy residues 323–355 (RKKEQAENRARNLKLKKDEKWAAKRAAEGRTDS) and 401–446 (AKLD…DPKN). Phosphothreonine is present on T353. S355 is modified (phosphoserine). The span at 447–460 (KRAKFDHRKSRKSK) shows a compositional bias: basic residues.

This sequence belongs to the PPAN family. Ubiquitous.

In terms of biological role, required for initiation of larval growth and normal mitotic growth but is not absolutely required for general biosynthesis or DNA replication. Required for progression of normal oogenesis and maturation of some imaginal tissues into adult structures. The polypeptide is Protein Peter pan (ppan) (Drosophila melanogaster (Fruit fly)).